A 463-amino-acid chain; its full sequence is V-type ATP synthase beta chain (463 aa).

This sequence belongs to the ATPase alpha/beta chains family.

Its function is as follows. Produces ATP from ADP in the presence of a proton gradient across the membrane. The V-type beta chain is a regulatory subunit. The sequence is that of V-type ATP synthase beta chain from Halothermothrix orenii (strain H 168 / OCM 544 / DSM 9562).